A 426-amino-acid polypeptide reads, in one-letter code: Glutamyl-tRNA reductase (426 aa).

Substrate contacts are provided by residues 50 to 53 (TCNR), serine 108, 113 to 115 (EPQ), and glutamine 119. Cysteine 51 serves as the catalytic Nucleophile. 188–193 (GAGEMI) provides a ligand contact to NADP(+).

The protein belongs to the glutamyl-tRNA reductase family. As to quaternary structure, homodimer.

The enzyme catalyses (S)-4-amino-5-oxopentanoate + tRNA(Glu) + NADP(+) = L-glutamyl-tRNA(Glu) + NADPH + H(+). It participates in porphyrin-containing compound metabolism; protoporphyrin-IX biosynthesis; 5-aminolevulinate from L-glutamyl-tRNA(Glu): step 1/2. In terms of biological role, catalyzes the NADPH-dependent reduction of glutamyl-tRNA(Glu) to glutamate 1-semialdehyde (GSA). The protein is Glutamyl-tRNA reductase of Polaromonas sp. (strain JS666 / ATCC BAA-500).